We begin with the raw amino-acid sequence, 30 residues long: Kalata-B5 (30 aa).

A cross-link (cyclopeptide (Gly-Asn)) is located at residues 1-30 (GTPCGESCVYIPCISGVIGCSCTDKVCYLN). 3 disulfide bridges follow: cysteine 4–cysteine 20, cysteine 8–cysteine 22, and cysteine 13–cysteine 27.

This is a cyclic peptide.

Its function is as follows. Probably participates in a plant defense mechanism. In Oldenlandia affinis, this protein is Kalata-B5.